Consider the following 407-residue polypeptide: Cation efflux system protein CusB (407 aa).

A signal peptide spans 1-28 (MKKIALIIGSMIAGGIISAAGFTWVAKA).

The protein belongs to the membrane fusion protein (MFP) (TC 8.A.1) family. The cus efflux system is composed of CusA, CusB, CusC and CusF.

In terms of biological role, part of a cation efflux system that mediates resistance to copper and silver. The chain is Cation efflux system protein CusB (cusB) from Escherichia coli (strain K12).